Consider the following 260-residue polypeptide: Cell division protein FtsQ (260 aa).

At 1–26 (MINKVLLEGQRITRSPQVKQHACGAS) the chain is on the cytoplasmic side. The helical transmembrane segment at 27–47 (FFLVVLLLIGGLLYSTISWMW) threads the bilayer. Over 48 to 260 (DEQRLPLSKL…QELTQEKNDD (213 aa)) the chain is Periplasmic. A POTRA domain is found at 52–122 (LPLSKLVLQG…DTIKVYLTEY (71 aa)).

It belongs to the FtsQ/DivIB family. FtsQ subfamily. As to quaternary structure, part of a complex composed of FtsB, FtsL and FtsQ.

The protein resides in the cell inner membrane. In terms of biological role, essential cell division protein. May link together the upstream cell division proteins, which are predominantly cytoplasmic, with the downstream cell division proteins, which are predominantly periplasmic. May control correct divisome assembly. In Vibrio cholerae serotype O1 (strain ATCC 39315 / El Tor Inaba N16961), this protein is Cell division protein FtsQ.